The primary structure comprises 491 residues: Glutamate--tRNA ligase (491 aa).

The 'HIGH' region motif lies at 12–22 (PSPTGTPHVGL). Positions 111-134 (STPEEVEERHKAAGRDPKLGYDNF) are disordered. The span at 117–134 (EERHKAAGRDPKLGYDNF) shows a compositional bias: basic and acidic residues. The short motif at 256-260 (KLSKR) is the 'KMSKS' region element. An ATP-binding site is contributed by K259.

It belongs to the class-I aminoacyl-tRNA synthetase family. Glutamate--tRNA ligase type 1 subfamily. Monomer.

It is found in the cytoplasm. The enzyme catalyses tRNA(Glu) + L-glutamate + ATP = L-glutamyl-tRNA(Glu) + AMP + diphosphate. Its function is as follows. Catalyzes the attachment of glutamate to tRNA(Glu) in a two-step reaction: glutamate is first activated by ATP to form Glu-AMP and then transferred to the acceptor end of tRNA(Glu). This chain is Glutamate--tRNA ligase, found in Rhodococcus jostii (strain RHA1).